Here is an 856-residue protein sequence, read N- to C-terminus: Inactive rhomboid protein 1 (856 aa).

The disordered stretch occupies residues 1 to 21 (MGEARRDSSSSLQHKKPPWLK). Topologically, residues 1 to 412 (MGEARRDSSS…HRPFFTYWLT (412 aa)) are cytoplasmic. Phosphoserine is present on residues S76 and S176. A phosphothreonine mark is found at T180 and T183. Phosphoserine is present on S391. The helical transmembrane segment at 413 to 433 (FVHSLVTILAVCIYGVAPVGF) threads the bilayer. The Lumenal segment spans residues 434-656 (SQHETVDSVL…NPEVPDQFYR (223 aa)). Residue N584 is glycosylated (N-linked (GlcNAc...) asparagine). Residues 657–677 (LWLSLFLHAGVLHCLVSVCFQ) form a helical membrane-spanning segment. The Cytoplasmic portion of the chain corresponds to 678-692 (MTVLRDLEKLAGWHR). A helical membrane pass occupies residues 693–713 (IAIIYLLSGVTGNLASAIFLP). The Lumenal portion of the chain corresponds to 714–715 (YR). The helical transmembrane segment at 716–736 (AEVGPAGSQFGILACLFVELF) threads the bilayer. Topologically, residues 737–747 (QSWQILARPWR) are cytoplasmic. The chain crosses the membrane as a helical span at residues 748–768 (AFFKLLAVVLFLFTFGLLPWI). Residues 769–773 (DNFAH) lie on the Lumenal side of the membrane. Residues 774 to 794 (ISGFISGLFLSFAFLPYISFG) traverse the membrane as a helical segment. The Cytoplasmic segment spans residues 795–804 (KFDLYRKRCQ). A helical transmembrane segment spans residues 805–825 (IIVFQLVFLGLLAGLVVLFYF). Residues 826 to 856 (YPVRCEWCEFLTCIPFTDKFCEKYELDAQLH) lie on the Lumenal side of the membrane.

Belongs to the peptidase S54 family. In terms of assembly, homodimer, or homooligomer. Interacts with TGFA and HBEGF. Interacts with EGF; may retain EGF in the endoplasmic reticulum and regulates its degradation through the endoplasmic reticulum-associated degradation (ERAD). Interacts (via cytoplasmic N-terminus) with FRMD8/iTAP; this interaction leads to mutual protein stabilization. Interacts with ADAM17/TACE.

It is found in the endoplasmic reticulum membrane. It localises to the golgi apparatus membrane. In terms of biological role, regulates ADAM17 protease, a sheddase of the epidermal growth factor (EGF) receptor ligands and TNF, thereby plays a role in sleep, cell survival, proliferation, migration and inflammation. Does not exhibit any protease activity on its own. The chain is Inactive rhomboid protein 1 (RHBDF1) from Bos taurus (Bovine).